Reading from the N-terminus, the 349-residue chain is Secretory carrier-associated membrane protein 3 (349 aa).

A disordered region spans residues Met-1–Thr-90. Residues Met-1–Thr-168 are Cytoplasmic-facing. At Ser-32 the chain carries Phosphoserine. At Thr-37 the chain carries Phosphothreonine. Residues Tyr-41 and Tyr-53 each carry the phosphotyrosine modification. Residues Pro-49–Ala-68 show a composition bias toward pro residues. Phosphoserine occurs at positions 74 and 78. Tyr-85 carries the phosphotyrosine modification. Position 87 is a phosphoserine (Ser-87). Helical transmembrane passes span Met-169–Ala-189, Gly-200–Tyr-220, Phe-236–Ile-256, and Val-277–Val-297. The Cytoplasmic portion of the chain corresponds to Met-298–Pro-349. Residue Lys-315 forms a Glycyl lysine isopeptide (Lys-Gly) (interchain with G-Cter in SUMO1) linkage.

This sequence belongs to the SCAMP family. Interacts with NEDD4 and NEDD4L and TSG101. Interacts with RNF126. Post-translationally, monoubiquitinated.

Its subcellular location is the membrane. Functionally, functions in post-Golgi recycling pathways. Acts as a recycling carrier to the cell surface. This Mus musculus (Mouse) protein is Secretory carrier-associated membrane protein 3 (Scamp3).